The sequence spans 191 residues: UPF0312 protein SO_3370 (191 aa).

The N-terminal stretch at 1–22 (MKKQLFSALIGASLFAPMAVSA) is a signal peptide.

It belongs to the UPF0312 family. Type 1 subfamily.

Its subcellular location is the periplasm. In Shewanella oneidensis (strain ATCC 700550 / JCM 31522 / CIP 106686 / LMG 19005 / NCIMB 14063 / MR-1), this protein is UPF0312 protein SO_3370.